We begin with the raw amino-acid sequence, 198 residues long: Na(+)-translocating NADH-quinone reductase subunit E (198 aa).

The next 6 membrane-spanning stretches (helical) occupy residues 11–31 (AVFI…FLAV), 39–59 (FGLG…NNLV), 77–97 (FLNF…LEMI), 109–129 (LGIF…VSFM), 140–160 (IVYG…LASI), and 176–196 (LGVT…FSGV).

The protein belongs to the NqrDE/RnfAE family. In terms of assembly, composed of six subunits; NqrA, NqrB, NqrC, NqrD, NqrE and NqrF.

It is found in the cell inner membrane. It carries out the reaction a ubiquinone + n Na(+)(in) + NADH + H(+) = a ubiquinol + n Na(+)(out) + NAD(+). Functionally, NQR complex catalyzes the reduction of ubiquinone-1 to ubiquinol by two successive reactions, coupled with the transport of Na(+) ions from the cytoplasm to the periplasm. NqrA to NqrE are probably involved in the second step, the conversion of ubisemiquinone to ubiquinol. In Proteus mirabilis (strain HI4320), this protein is Na(+)-translocating NADH-quinone reductase subunit E.